The sequence spans 101 residues: Protein Tat (101 aa).

Residues 1-24 are interaction with human CREBBP; sequence MEPVDPNREPWNHPGSQPKTACTN. The segment at 1–48 is transactivation; the sequence is MEPVDPNREPWNHPGSQPKTACTNCYCKKCCYHCQVCFLQKGLGISYG. Residues Cys-22, Cys-25, and Cys-27 each coordinate Zn(2+). Positions 22-37 are cysteine-rich; sequence CTNCYCKKCCYHCQVC. An N6-acetyllysine; by host PCAF modification is found at Lys-28. Zn(2+) contacts are provided by Cys-30, His-33, Cys-34, and Cys-37. The tract at residues 38 to 48 is core; the sequence is FLQKGLGISYG. The segment at 48-101 is disordered; that stretch reads GRKKRRQRRSAPPGSKNHQDLIPEQPLFQTQRKPTGPEESKKEVESKAEPDRFD. Positions 49-57 match the Nuclear localization signal, RNA-binding (TAR), and protein transduction motif; the sequence is RKKRRQRRS. The interaction with the host capping enzyme RNGTT stretch occupies residues 49-86; it reads RKKRRQRRSAPPGSKNHQDLIPEQPLFQTQRKPTGPEE. Lys-50 and Lys-51 each carry N6-acetyllysine; by host EP300 and GCN5L2. Arg-52 and Arg-53 each carry asymmetric dimethylarginine; by host PRMT6. A compositionally biased stretch (basic and acidic residues) spans 82 to 101; it reads TGPEESKKEVESKAEPDRFD.

It belongs to the lentiviruses Tat family. In terms of assembly, interacts with host CCNT1. Associates with the P-TEFb complex composed at least of Tat, P-TEFb (CDK9 and CCNT1), TAR RNA, RNA Pol II. Recruits the HATs CREBBP, TAF1/TFIID, EP300, PCAF and GCN5L2. Interacts with host KAT5/Tip60; this interaction targets the latter to degradation. Interacts with the host deacetylase SIRT1. Interacts with host capping enzyme RNGTT; this interaction stimulates RNGTT. Binds to host KDR, and to the host integrins ITGAV/ITGB3 and ITGA5/ITGB1. Interacts with host KPNB1/importin beta-1 without previous binding to KPNA1/importin alpha-1. Interacts with EIF2AK2. Interacts with host nucleosome assembly protein NAP1L1; this interaction may be required for the transport of Tat within the nucleus, since the two proteins interact at the nuclear rim. Interacts with host C1QBP/SF2P32; this interaction involves lysine-acetylated Tat. Interacts with the host chemokine receptors CCR2, CCR3 and CXCR4. Interacts with host DPP4/CD26; this interaction may trigger an anti-proliferative effect. Interacts with host LDLR. Interacts with the host extracellular matrix metalloproteinase MMP1. Interacts with host PRMT6; this interaction mediates Tat's methylation. Interacts with, and is ubiquitinated by MDM2/Hdm2. Interacts with host PSMC3 and HTATIP2. Interacts with STAB1; this interaction may overcome SATB1-mediated repression of IL2 and IL2RA (interleukin) in T cells by binding to the same domain than HDAC1. Interacts (when acetylated) with human CDK13, thereby increasing HIV-1 mRNA splicing and promoting the production of the doubly spliced HIV-1 protein Nef. Interacts with host TBP; this interaction modulates the activity of transcriptional pre-initiation complex. Interacts with host RELA. Interacts with host PLSCR1; this interaction negatively regulates Tat transactivation activity by altering its subcellular distribution. Asymmetrical arginine methylation by host PRMT6 seems to diminish the transactivation capacity of Tat and affects the interaction with host CCNT1. In terms of processing, acetylation by EP300, CREBBP, GCN5L2/GCN5 and PCAF regulates the transactivation activity of Tat. EP300-mediated acetylation of Lys-50 promotes dissociation of Tat from the TAR RNA through the competitive binding to PCAF's bromodomain. In addition, the non-acetylated Tat's N-terminus can also interact with PCAF. PCAF-mediated acetylation of Lys-28 enhances Tat's binding to CCNT1. Lys-50 is deacetylated by SIRT1. Post-translationally, polyubiquitination by host MDM2 does not target Tat to degradation, but activates its transactivation function and fosters interaction with CCNT1 and TAR RNA. Phosphorylated by EIF2AK2 on serine and threonine residues adjacent to the basic region important for TAR RNA binding and function. Phosphorylation of Tat by EIF2AK2 is dependent on the prior activation of EIF2AK2 by dsRNA.

It is found in the host nucleus. It localises to the host nucleolus. The protein localises to the host cytoplasm. The protein resides in the secreted. Its function is as follows. Transcriptional activator that increases RNA Pol II processivity, thereby increasing the level of full-length viral transcripts. Recognizes a hairpin structure at the 5'-LTR of the nascent viral mRNAs referred to as the transactivation responsive RNA element (TAR) and recruits the cyclin T1-CDK9 complex (P-TEFb complex) that will in turn hyperphosphorylate the RNA polymerase II to allow efficient elongation. The CDK9 component of P-TEFb and other Tat-activated kinases hyperphosphorylate the C-terminus of RNA Pol II that becomes stabilized and much more processive. Other factors such as HTATSF1/Tat-SF1, SUPT5H/SPT5, and HTATIP2 are also important for Tat's function. Besides its effect on RNA Pol II processivity, Tat induces chromatin remodeling of proviral genes by recruiting the histone acetyltransferases (HATs) CREBBP, EP300 and PCAF to the chromatin. This also contributes to the increase in proviral transcription rate, especially when the provirus integrates in transcriptionally silent region of the host genome. To ensure maximal activation of the LTR, Tat mediates nuclear translocation of NF-kappa-B by interacting with host RELA. Through its interaction with host TBP, Tat may also modulate transcription initiation. Tat can reactivate a latently infected cell by penetrating in it and transactivating its LTR promoter. In the cytoplasm, Tat is thought to act as a translational activator of HIV-1 mRNAs. Functionally, extracellular circulating Tat can be endocytosed by surrounding uninfected cells via the binding to several surface receptors such as CD26, CXCR4, heparan sulfate proteoglycans (HSPG) or LDLR. Neurons are rarely infected, but they internalize Tat via their LDLR. Through its interaction with nuclear HATs, Tat is potentially able to control the acetylation-dependent cellular gene expression. Modulates the expression of many cellular genes involved in cell survival, proliferation or in coding for cytokines or cytokine receptors. Tat plays a role in T-cell and neurons apoptosis. Tat induced neurotoxicity and apoptosis probably contribute to neuroAIDS. Circulating Tat also acts as a chemokine-like and/or growth factor-like molecule that binds to specific receptors on the surface of the cells, affecting many cellular pathways. In the vascular system, Tat binds to ITGAV/ITGB3 and ITGA5/ITGB1 integrins dimers at the surface of endothelial cells and competes with bFGF for heparin-binding sites, leading to an excess of soluble bFGF. This Human immunodeficiency virus type 1 group M subtype J (isolate SE9173) (HIV-1) protein is Protein Tat.